Consider the following 364-residue polypeptide: PDZ and LIM domain protein 3 (364 aa).

The PDZ domain occupies Met1–Glu84. Ser18, Ser93, and Ser264 each carry phosphoserine. The LIM zinc-binding domain maps to Pro292 to Pro351.

As to quaternary structure, interacts with ACTN2. Forms a heterodimer with PDLIM4 (via LIM domain). Isoform 1 is highly expressed in differentiated skeletal muscle. Isoform 2 is heart-specific.

It localises to the cytoplasm. The protein localises to the myofibril. It is found in the sarcomere. Its subcellular location is the z line. Functionally, may play a role in the organization of actin filament arrays within muscle cells. The chain is PDZ and LIM domain protein 3 (PDLIM3) from Homo sapiens (Human).